The following is a 786-amino-acid chain: Kazrin-A (786 aa).

The segment at 44–70 is disordered; it reads EEPGEPQEHQQQQQQQNHQDAPVQRQK. Low complexity predominate over residues 52-62; sequence HQQQQQQQNHQ. The stretch at 92–270 forms a coiled coil; sequence LLHEEVLRLQ…SLATLTKDVP (179 aa). The interval 350 to 425 is disordered; the sequence is MSDASVMEGE…LFDDSDSLSS (76 aa). 3 consecutive SAM domains span residues 457-522, 535-599, and 623-686; these read WRAG…YRDA, DHHW…LHTL, and WTCQ…SEEM. Positions 703–760 are disordered; sequence PLGTPPTLHRQSSLSSSSPSCHDDQQSLRRVKQQLGLSPKNLTARNISHQSRSGSFPR. A compositionally biased stretch (polar residues) spans 742–758; that stretch reads KNLTARNISHQSRSGSF.

Belongs to the kazrin family.

The polypeptide is Kazrin-A (kazna) (Danio rerio (Zebrafish)).